Consider the following 261-residue polypeptide: MRAQDHAISSVKAKLQVRRLNFYYGRTQALKNIELSIPERKITAFIGPSGCGKSTLLRTFNKMYTLYPEQRAEGEIWMDGENLLDPKQDIALLRARIGMVFQKPTPFPMSVYDNIAFGMKLFERLSGAEMDARVDGRRHPGPLWNEVKNTLRQSGICLSGGQQQRLCIARAIAIRPEVLLLDEPCSALDPISTGRIEELISELGHEYTVVIVTHNLQQAARCSDYTAYLYLGELVEFGETQQLFMKPAHQETENYITGRFG.

Residues 15 to 256 (LQVRRLNFYY…PAHQETENYI (242 aa)) form the ABC transporter domain. Residue 47-54 (GPSGCGKS) participates in ATP binding.

Belongs to the ABC transporter superfamily. Phosphate importer (TC 3.A.1.7) family. The complex is composed of two ATP-binding proteins (PstB), two transmembrane proteins (PstC and PstA) and a solute-binding protein (PstS).

The protein localises to the cell inner membrane. The enzyme catalyses phosphate(out) + ATP + H2O = ADP + 2 phosphate(in) + H(+). Part of the ABC transporter complex PstSACB involved in phosphate import. Responsible for energy coupling to the transport system. This chain is Phosphate import ATP-binding protein PstB, found in Burkholderia sp.